The following is a 387-amino-acid chain: MEQVVIVDAIRTPMGRSKGGAFRNVRAEDLSAHLMRSLLARNPALEAAALDDIYWGCVQQTLEQGFNIARNAALLAEVPHSVPAVTVNRLCGSSMQALHDAARMIMTGDAQACLVGGVEHMGHVPMSHGVDFHPGLSRNVAKAAGMMGLTAEMLARMHGISREMQDAFAARSHARAWAATQSGAFKNEIIPTGGHDADGVLKQFNYDEVIRPETTVEALATLRPAFDPVSGTVTAGTSSALSDGAAAMLVMSESRARELGLKPRARVRSMAVVGCDPSIMGYGPVPASKLALKKAGLSASDIGVFEMNEAFAAQILPCIKDLGLMEQIDEKINLNGGAIALGHPLGCSGARISTTLLNLMEHKDVQFGLATMCIGLGQGIATVFERV.

C91 serves as the catalytic Acyl-thioester intermediate. Residues H343 and C373 each act as proton acceptor in the active site.

Belongs to the thiolase-like superfamily. Thiolase family. In terms of assembly, heterotetramer of two alpha chains (FadB) and two beta chains (FadA).

The protein resides in the cytoplasm. It carries out the reaction an acyl-CoA + acetyl-CoA = a 3-oxoacyl-CoA + CoA. It functions in the pathway lipid metabolism; fatty acid beta-oxidation. Functionally, catalyzes the final step of fatty acid oxidation in which acetyl-CoA is released and the CoA ester of a fatty acid two carbons shorter is formed. This is 3-ketoacyl-CoA thiolase from Escherichia coli O1:K1 / APEC.